The primary structure comprises 376 residues: Gibberellic acid methyltransferase 1 (376 aa).

Positions 22, 64, 69, 104, 105, 136, and 137 each coordinate S-adenosyl-L-homocysteine. Trp158 provides a ligand contact to gibberellin A9. Positions 175, 179, 265, 266, 268, and 269 each coordinate Mg(2+).

Belongs to the methyltransferase superfamily. Type-7 methyltransferase family. SABATH subfamily. Mg(2+) is required as a cofactor. Expressed in siliques, developing seeds, anthers and germinating seeds. Not detected in leaves, stems, flowers and roots.

It catalyses the reaction gibberellin A9 + S-adenosyl-L-methionine = O-methyl gibberellin A9 + S-adenosyl-L-homocysteine. Up-regulated by K(+) and NH(4+), down-regulated by Zn(2+), Cu(2+), Fe(2+) and Fe(3+). Its function is as follows. Methylates the carboxyl group of several gibberellins (GAs). Substrate preference is GA9 &gt; GA20 &gt; GA3 &gt; GA4 &gt; GA34 &gt; GA51 &gt; GA1 &gt; GA19 &gt; GA12. No activity with diterpenes abietic acid and ent-kaurenoic acid. This chain is Gibberellic acid methyltransferase 1 (GAMT1), found in Arabidopsis thaliana (Mouse-ear cress).